Consider the following 155-residue polypeptide: 6,7-dimethyl-8-ribityllumazine synthase (155 aa).

Residues phenylalanine 23, 57-59, and 81-83 contribute to the 5-amino-6-(D-ribitylamino)uracil site; these read AYE and AVI. Residue 86 to 87 participates in (2S)-2-hydroxy-3-oxobutyl phosphate binding; sequence AT. Histidine 89 functions as the Proton donor in the catalytic mechanism. Phenylalanine 114 is a binding site for 5-amino-6-(D-ribitylamino)uracil. Arginine 128 is a binding site for (2S)-2-hydroxy-3-oxobutyl phosphate.

This sequence belongs to the DMRL synthase family.

It carries out the reaction (2S)-2-hydroxy-3-oxobutyl phosphate + 5-amino-6-(D-ribitylamino)uracil = 6,7-dimethyl-8-(1-D-ribityl)lumazine + phosphate + 2 H2O + H(+). It participates in cofactor biosynthesis; riboflavin biosynthesis; riboflavin from 2-hydroxy-3-oxobutyl phosphate and 5-amino-6-(D-ribitylamino)uracil: step 1/2. Functionally, catalyzes the formation of 6,7-dimethyl-8-ribityllumazine by condensation of 5-amino-6-(D-ribitylamino)uracil with 3,4-dihydroxy-2-butanone 4-phosphate. This is the penultimate step in the biosynthesis of riboflavin. This is 6,7-dimethyl-8-ribityllumazine synthase from Desulfotalea psychrophila (strain LSv54 / DSM 12343).